A 273-amino-acid chain; its full sequence is Oxidized low-density lipoprotein receptor 1 (273 aa).

The disordered stretch occupies residues 1 to 22 (MTFDDLKIQTVKDQPDEKSNGK). Residues 1-36 (MTFDDLKIQTVKDQPDEKSNGKKAKGLQFLYSPWWC) lie on the Cytoplasmic side of the membrane. Residues Cys36 and Cys46 are each lipidated (S-palmitoyl cysteine). The helical; Signal-anchor for type II membrane protein transmembrane segment at 37-57 (LAAATLGVLCLGLVVTIMVLG) threads the bilayer. The segment at 58–150 (MQLSQVSDLL…SAPCPQDWIW (93 aa)) is neck. The Extracellular segment spans residues 58-273 (MQLSQVSDLL…CQKKANLRAQ (216 aa)). Positions 64 to 123 (SDLLTQEQANLTHQKKKLEGQISARQQAEEASQESENELKEMIETLARKLNEKSKEQMEL) form a coiled coil. An N-linked (GlcNAc...) asparagine glycan is attached at Asn73. Asn139 carries an N-linked (GlcNAc...) (complex) asparagine glycan. 3 disulfide bridges follow: Cys144–Cys155, Cys172–Cys264, and Cys243–Cys256. Positions 151 to 265 (HGENCYLFSS…CILAAFSICQ (115 aa)) constitute a C-type lectin domain.

Homodimer; disulfide-linked. May form a hexamer composed of 3 homodimers. Interacts with HSP70. In terms of assembly, (Microbial infection) Binds to the head and beginning of the coiled stalk of N.meningitidis adhesin A (nadA) variant 3; binding can be abrogated by monoclonal antibodies against the specific regions of NadA. Binding occurs in protein microarrays, in solution and when LOX-1 is expressed on the cell surface. The intrachain disulfide-bonds prevent N-glycosylation at some sites. In terms of processing, N-glycosylated. Expressed at high level in endothelial cells and vascular-rich organs such as placenta, lung, liver and brain, aortic intima, bone marrow, spinal cord and substantia nigra. Also expressed at the surface of dendritic cells. Widely expressed at intermediate and low level.

It is found in the cell membrane. It localises to the membrane raft. The protein localises to the secreted. Functionally, receptor that mediates the recognition, internalization and degradation of oxidatively modified low density lipoprotein (oxLDL) by vascular endothelial cells. OxLDL is a marker of atherosclerosis that induces vascular endothelial cell activation and dysfunction, resulting in pro-inflammatory responses, pro-oxidative conditions and apoptosis. Its association with oxLDL induces the activation of NF-kappa-B through an increased production of intracellular reactive oxygen and a variety of pro-atherogenic cellular responses including a reduction of nitric oxide (NO) release, monocyte adhesion and apoptosis. In addition to binding oxLDL, it acts as a receptor for the HSP70 protein involved in antigen cross-presentation to naive T-cells in dendritic cells, thereby participating in cell-mediated antigen cross-presentation. Also involved in inflammatory process, by acting as a leukocyte-adhesion molecule at the vascular interface in endotoxin-induced inflammation. Also acts as a receptor for advanced glycation end (AGE) products, activated platelets, monocytes, apoptotic cells and both Gram-negative and Gram-positive bacteria. Its function is as follows. (Microbial infection) May serve as a receptor for adhesin A variant 3 (nadA) of N.meningitidis. The polypeptide is Oxidized low-density lipoprotein receptor 1 (OLR1) (Homo sapiens (Human)).